Here is a 1514-residue protein sequence, read N- to C-terminus: Mitogen-activated protein kinase-binding protein 1 (1514 aa).

An N-acetylalanine modification is found at A2. WD repeat units lie at residues 88-129, 132-173, 175-213, 276-315, 342-381, 387-436, 477-516, 519-561, 565-606, 614-653, 659-698, and 701-740; these read SSRK…QVAE, EHKY…VVAS, KVSS…TSKV, DSFT…FLST, ARYP…KVGK, YHSS…VHGS, DPRV…EMLK, AHDS…SLQQ, EHSS…DGVQ, VRKT…QKKL, GEDG…CVAT, and GHSE…TISM. Disordered stretches follow at residues 748–804, 880–925, 951–1256, and 1299–1336; these read RQRQ…PALP, PSLQ…SQPC, EDGI…SSMA, and DIPK…GLGK. The span at 789–800 shows a compositional bias: acidic residues; that stretch reads KEGEDEGTEEEL. Polar residues-rich tracts occupy residues 905-925 and 961-971; these read LETS…SQPC and DNPTMDTSEFQ. Positions 996-1011 are enriched in low complexity; the sequence is DSACSVDYSSSCLSSP. Residues 1032-1048 show a composition bias toward acidic residues; the sequence is DLEEPAEGDEEEEEEEG. Residues 1113–1126 show a composition bias toward low complexity; it reads PSPSSSSLALMSRP. Polar residues-rich tracts occupy residues 1188 to 1200 and 1245 to 1256; these read SPFS…QSVH and HSYQNPTTSSMA. Position 1198 is a phosphoserine (S1198).

Can form homodimers (via C-terminus). Interacts (via C-terminus) with WDR62 (via C-terminus). Interacts with MAPK9. Interacts (via N-terminus) with NOD2; the interaction is enhanced in presence of muramyl dipeptide (MDP). Interacts with MAPK10. In terms of tissue distribution, expressed in intestinal mucosa, where it is detected in epithelial cells, endothelial cells, smooth muscle cells and immune cells, such as lymphocytes. Expressed in kidney.

The protein resides in the cytoplasm. Its subcellular location is the nucleus. The protein localises to the cytoskeleton. It localises to the spindle pole. Functionally, negative regulator of NOD2 function. It down-regulates NOD2-induced processes such as activation of NF-kappa-B signaling, IL8 secretion and antibacterial response. Involved in JNK signaling pathway. The sequence is that of Mitogen-activated protein kinase-binding protein 1 (MAPKBP1) from Homo sapiens (Human).